A 105-amino-acid chain; its full sequence is Large ribosomal subunit protein uL24 (105 aa).

Belongs to the universal ribosomal protein uL24 family. As to quaternary structure, part of the 50S ribosomal subunit.

Functionally, one of two assembly initiator proteins, it binds directly to the 5'-end of the 23S rRNA, where it nucleates assembly of the 50S subunit. One of the proteins that surrounds the polypeptide exit tunnel on the outside of the subunit. The protein is Large ribosomal subunit protein uL24 of Staphylococcus carnosus (strain TM300).